The primary structure comprises 197 residues: Large ribosomal subunit protein uL18 (197 aa).

The protein belongs to the universal ribosomal protein uL18 family. As to quaternary structure, part of the 50S ribosomal subunit. Contacts the 5S and 23S rRNAs.

Functionally, this is one of the proteins that bind and probably mediate the attachment of the 5S RNA into the large ribosomal subunit, where it forms part of the central protuberance. The polypeptide is Large ribosomal subunit protein uL18 (Sulfolobus acidocaldarius (strain ATCC 33909 / DSM 639 / JCM 8929 / NBRC 15157 / NCIMB 11770)).